The sequence spans 317 residues: Phospho-N-acetylmuramoyl-pentapeptide-transferase (317 aa).

Transmembrane regions (helical) follow at residues 3-23 (VIIYSVLISFLFSILQGPLFI), 48-68 (GTPTMGGIIFITTAIIAMIIM), 72-92 (LNSNAVFAFVCFFSFAMIGLI), 112-132 (FLLQIIVSAAISYYAYIRFGS), 141-161 (ITWTLPPIVYMAAVVFYFVAV), 171-191 (LDGLASSVTILVVTFFTVVSF), 193-213 (WHQYELSVFCGIIVGILLGFL), 238-258 (AIALVLKLPLLVIIVGGIYVI), and 297-317 (VVSVFSIVTVILCLIAFLSLI).

Belongs to the glycosyltransferase 4 family. MraY subfamily. It depends on Mg(2+) as a cofactor.

It is found in the cell membrane. The catalysed reaction is UDP-N-acetyl-alpha-D-muramoyl-L-alanyl-gamma-D-glutamyl-meso-2,6-diaminopimeloyl-D-alanyl-D-alanine + di-trans,octa-cis-undecaprenyl phosphate = di-trans,octa-cis-undecaprenyl diphospho-N-acetyl-alpha-D-muramoyl-L-alanyl-D-glutamyl-meso-2,6-diaminopimeloyl-D-alanyl-D-alanine + UMP. The protein operates within cell wall biogenesis; peptidoglycan biosynthesis. In terms of biological role, catalyzes the initial step of the lipid cycle reactions in the biosynthesis of the cell wall peptidoglycan: transfers peptidoglycan precursor phospho-MurNAc-pentapeptide from UDP-MurNAc-pentapeptide onto the lipid carrier undecaprenyl phosphate, yielding undecaprenyl-pyrophosphoryl-MurNAc-pentapeptide, known as lipid I. The polypeptide is Phospho-N-acetylmuramoyl-pentapeptide-transferase (Clostridium acetobutylicum (strain ATCC 824 / DSM 792 / JCM 1419 / IAM 19013 / LMG 5710 / NBRC 13948 / NRRL B-527 / VKM B-1787 / 2291 / W)).